We begin with the raw amino-acid sequence, 243 residues long: Isoprenyl transferase 2 (243 aa).

D23 is an active-site residue. D23 lines the Mg(2+) pocket. Substrate-binding positions include 24 to 27, W28, R36, H40, and 68 to 70; these read GNGR and STE. N71 serves as the catalytic Proton acceptor. Residues W72, R74, R191, and 197–199 each bind substrate; that span reads RTS. E210 contacts Mg(2+).

The protein belongs to the UPP synthase family. In terms of assembly, homodimer. Mg(2+) is required as a cofactor.

Its function is as follows. Catalyzes the condensation of isopentenyl diphosphate (IPP) with allylic pyrophosphates generating different type of terpenoids. This is Isoprenyl transferase 2 from Corynebacterium glutamicum (strain ATCC 13032 / DSM 20300 / JCM 1318 / BCRC 11384 / CCUG 27702 / LMG 3730 / NBRC 12168 / NCIMB 10025 / NRRL B-2784 / 534).